Consider the following 340-residue polypeptide: Methionine import ATP-binding protein MetN (340 aa).

Residues 6-245 enclose the ABC transporter domain; sequence IEFEGITKVF…PQTNVAKRFV (240 aa). 42–49 lines the ATP pocket; it reads GYSGAGKS.

It belongs to the ABC transporter superfamily. Methionine importer (TC 3.A.1.24) family. In terms of assembly, the complex is composed of two ATP-binding proteins (MetN), two transmembrane proteins (MetI) and a solute-binding protein (MetQ).

Its subcellular location is the cell membrane. It catalyses the reaction L-methionine(out) + ATP + H2O = L-methionine(in) + ADP + phosphate + H(+). The catalysed reaction is D-methionine(out) + ATP + H2O = D-methionine(in) + ADP + phosphate + H(+). In terms of biological role, part of the ABC transporter complex MetNIQ involved in methionine import. Responsible for energy coupling to the transport system. The sequence is that of Methionine import ATP-binding protein MetN from Corynebacterium diphtheriae (strain ATCC 700971 / NCTC 13129 / Biotype gravis).